A 444-amino-acid polypeptide reads, in one-letter code: Acyl-CoA (8-3)-desaturase (444 aa).

M1 is modified (N-acetylmethionine). Residues 1–121 are Cytoplasmic-facing; it reads MAPDPVAAKT…FRELRATVEQ (121 aa). The Cytochrome b5 heme-binding domain occupies 17-94; it reads PRYFTWDEVA…MNSLLIGELS (78 aa). The chain crosses the membrane as a helical span at residues 122-142; the sequence is MGLMKANHVFFLLYLLHILLL. At 143–146 the chain is on the lumenal side; sequence DGAA. Residues 147-167 traverse the membrane as a helical segment; the sequence is WLTLWIFGTSFLPFLLCAVLL. The Cytoplasmic segment spans residues 168-267; sequence TAAQIQAGWL…PYNHQHKYFF (100 aa). Residues 179–183 carry the Histidine box-1 motif; sequence HDLGH. The short motif at 216 to 220 is the Histidine box-2 element; it reads HFQHH. A helical transmembrane segment spans residues 268-288; it reads LIGPPALVPFFFQWYVFYFVI. The Lumenal portion of the chain corresponds to 289 to 305; the sequence is QRKKWVDLAWMITFYIR. Residues 306–326 form a helical membrane-spanning segment; the sequence is LLLTYVPLLGLKAFLGLYFIV. The Cytoplasmic segment spans residues 327–444; it reads RFLESNWFVW…QLWLDAYLHQ (118 aa). Positions 382–386 match the Histidine box-3 motif; that stretch reads QIEHH.

It belongs to the fatty acid desaturase type 1 family. Widely expressed. Expressed in brain, liver and thymus (at protein level). Isoform 1 seems to be more abundant than isoform 2. Expression of isoform 2 is very low in spleen and not detectable in skeletal muscle.

Its subcellular location is the endoplasmic reticulum membrane. The protein resides in the mitochondrion. It catalyses the reaction (8Z,11Z,14Z)-eicosatrienoyl-CoA + 2 Fe(II)-[cytochrome b5] + O2 + 2 H(+) = (5Z,8Z,11Z,14Z)-eicosatetraenoyl-CoA + 2 Fe(III)-[cytochrome b5] + 2 H2O. The enzyme catalyses (8Z,11Z,14Z,17Z)-eicosatetraenoyl-CoA + 2 Fe(II)-[cytochrome b5] + O2 + 2 H(+) = (5Z,8Z,11Z,14Z,17Z)-eicosapentaenoyl-CoA + 2 Fe(III)-[cytochrome b5] + 2 H2O. It carries out the reaction (11E)-octadecenoyl-CoA + 2 Fe(II)-[cytochrome b5] + O2 + 2 H(+) = (5Z,11E)-octadecadienoyl-CoA + 2 Fe(III)-[cytochrome b5] + 2 H2O. Its pathway is lipid metabolism; polyunsaturated fatty acid biosynthesis. Functionally, acts as a front-end fatty acyl-coenzyme A (CoA) desaturase that introduces a cis double bond at carbon 5 located between a preexisting double bond and the carboxyl end of the fatty acyl chain. Involved in biosynthesis of highly unsaturated fatty acids (HUFA) from the essential polyunsaturated fatty acids (PUFA) linoleic acid (LA) (18:2n-6) and alpha-linolenic acid (ALA) (18:3n-3) precursors. Specifically, desaturates dihomo-gamma-linoleoate (DGLA) (20:3n-6) and eicosatetraenoate (ETA) (20:4n-3) to generate arachidonate (AA) (20:4n-6) and eicosapentaenoate (EPA) (20:5n-3), respectively. As a rate limiting enzyme for DGLA (20:3n-6) and AA (20:4n-6)-derived eicosanoid biosynthesis, controls the metabolism of inflammatory lipids like prostaglandin E2, critical for efficient acute inflammatory response and maintenance of epithelium homeostasis. Contributes to membrane phospholipid biosynthesis by providing AA (20:4n-6) as a major acyl chain esterified into phospholipids. In particular, regulates phosphatidylinositol-4,5-bisphosphate levels, modulating inflammatory cytokine production in T-cells. Also desaturates (11E)-octadecenoate (trans-vaccenoate)(18:1n-9), a metabolite in the biohydrogenation pathway of LA (18:2n-6). Does not exhibit any catalytic activity toward 20:3n-6, but it may enhance FADS2 activity. The sequence is that of Acyl-CoA (8-3)-desaturase from Papio anubis (Olive baboon).